Consider the following 366-residue polypeptide: Chorismate synthase (366 aa).

Positions 48 and 54 each coordinate NADP(+). FMN contacts are provided by residues 125 to 127, 238 to 239, Gly278, 293 to 297, and Arg319; these read RSS, NA, and KPTSS.

This sequence belongs to the chorismate synthase family. In terms of assembly, homotetramer. Requires FMNH2 as cofactor.

The enzyme catalyses 5-O-(1-carboxyvinyl)-3-phosphoshikimate = chorismate + phosphate. The protein operates within metabolic intermediate biosynthesis; chorismate biosynthesis; chorismate from D-erythrose 4-phosphate and phosphoenolpyruvate: step 7/7. Its function is as follows. Catalyzes the anti-1,4-elimination of the C-3 phosphate and the C-6 proR hydrogen from 5-enolpyruvylshikimate-3-phosphate (EPSP) to yield chorismate, which is the branch point compound that serves as the starting substrate for the three terminal pathways of aromatic amino acid biosynthesis. This reaction introduces a second double bond into the aromatic ring system. In Burkholderia ambifaria (strain MC40-6), this protein is Chorismate synthase.